A 156-amino-acid chain; its full sequence is Snaclec alboaggregin-B subunit alpha (156 aa).

The first 23 residues, 1 to 23 (MGRFIFVSFGLLVVFLSLSGTGA), serve as a signal peptide directing secretion. One can recognise a C-type lectin domain in the interval 24 to 151 (DCPSDWSSFK…CEQKHIFMCK (128 aa)). Disulfide bonds link Cys-25–Cys-36, Cys-53–Cys-150, and Cys-125–Cys-142.

It belongs to the snaclec family. As to quaternary structure, heterodimer of subunits alpha and beta; disulfide-linked. Expressed by the venom gland.

It is found in the secreted. Functionally, weakly agglutinates platelets at high doses by binding to GPIbalpha (GP1BA). In Trimeresurus albolabris (White-lipped pit viper), this protein is Snaclec alboaggregin-B subunit alpha.